A 93-amino-acid chain; its full sequence is Putative septation protein SpoVG (93 aa).

Belongs to the SpoVG family.

Its function is as follows. Could be involved in septation. The protein is Putative septation protein SpoVG of Alkaliphilus oremlandii (strain OhILAs) (Clostridium oremlandii (strain OhILAs)).